The chain runs to 623 residues: Putative ABC transporter ATP-binding protein MG014 (623 aa).

The region spanning 16–325 (LILAPFFTFA…YIVLGFILTS (310 aa)) is the ABC transmembrane type-1 domain. The next 6 membrane-spanning stretches (helical) occupy residues 27–47 (IVID…VFSI), 81–101 (VLAT…LISI), 157–177 (FLRL…FAVT), 181–201 (DMSI…GILN), 266–286 (NIPF…LLVF), and 307–327 (IFAF…TSLT). The ABC transporter domain maps to 365 to 611 (LEFRNISFGL…CSLYQKMKES (247 aa)). 400-407 (GPTGSGKS) lines the ATP pocket.

This sequence belongs to the ABC transporter superfamily.

Its subcellular location is the cell membrane. This Mycoplasma genitalium (strain ATCC 33530 / DSM 19775 / NCTC 10195 / G37) (Mycoplasmoides genitalium) protein is Putative ABC transporter ATP-binding protein MG014.